A 49-amino-acid polypeptide reads, in one-letter code: Large ribosomal subunit protein bL33 (49 aa).

The protein belongs to the bacterial ribosomal protein bL33 family.

The chain is Large ribosomal subunit protein bL33 from Lachnoclostridium phytofermentans (strain ATCC 700394 / DSM 18823 / ISDg) (Clostridium phytofermentans).